The primary structure comprises 251 residues: Capsid protein (251 aa).

The Bipartite nuclear localization signal motif lies at 3–20 (KRDLPWRSMAGTSKVSRN). The Nuclear localization signal motif lies at 35–49 (KAAEWVNRPMYRKPR). A zinc finger spans residues 63–80 (CEGPCKVQSFEQRHDISH). The Nuclear export signal motif lies at 96–117 (ITHRVGKRFCVKSVYILGKIWM). The Bipartite nuclear localization signal signature appears at 195 to 242 (KRFWKVNNHVVYNHQEAGKYENHTENALLLYMACTHASNPVYATLKIR).

Belongs to the geminiviridae capsid protein family. As to quaternary structure, homomultimer. Binds to single-stranded and double-stranded viral DNA. Interacts (via nuclear localization signals) with host importin alpha-1a.

The protein resides in the virion. Its subcellular location is the host nucleus. In terms of biological role, encapsidates the viral DNA into characteristic twinned ('geminate') particles. Binds the genomic viral ssDNA and shuttles it into and out of the cell nucleus. The CP of bipartite geminiviruses is not required for cell-to-cell or systemic movement. The sequence is that of Capsid protein from Tomato mottle virus (isolate Florida) (ToMoV).